Consider the following 665-residue polypeptide: Putative phospholipid:diacylglycerol acyltransferase 2 (665 aa).

The chain crosses the membrane as a helical span at residues 48-68 (LIGYLCTAWWLLLFLYHSVPV). Catalysis depends on serine 237, which acts as the Acyl-ester intermediate. Catalysis depends on charge relay system residues aspartate 567 and histidine 620.

This sequence belongs to the AB hydrolase superfamily. Lipase family.

The protein localises to the membrane. The catalysed reaction is a glycerophospholipid + a 1,2-diacyl-sn-glycerol = a monoacylglycerophospholipid + a triacyl-sn-glycerol. The sequence is that of Putative phospholipid:diacylglycerol acyltransferase 2 (PDAT2) from Arabidopsis thaliana (Mouse-ear cress).